The primary structure comprises 407 residues: Protein NIS1 (407 aa).

Positions 41 to 61 are enriched in low complexity; sequence SNSNSNSNTNSNTNSNTNSNS. Positions 41-64 are disordered; that stretch reads SNSNSNSNTNSNTNSNTNSNSDTK. Phosphoserine occurs at positions 260, 264, 300, and 302. A compositionally biased stretch (polar residues) spans 277-302; it reads IKQNSTTPTTRSVYNKNVGRSNTSPS. The tract at residues 277–315 is disordered; sequence IKQNSTTPTTRSVYNKNVGRSNTSPSVLYHPKRRGKLNT. The span at 306–315 shows a compositional bias: basic residues; sequence HPKRRGKLNT. The short motif at 391–398 is the SUMO-binding element; that stretch reads IIIPDSQD.

In terms of assembly, interacts with CBF2, GIS1, NAP1, PRM8, REI1, SHS1 and SMT3.

Its subcellular location is the bud neck. The protein localises to the cytoplasm. It localises to the cell cortex. In terms of biological role, may be involved in a mitotic signaling network. Binds sumoylated proteins and may stabilize SUMO chains. This chain is Protein NIS1 (NIS1), found in Saccharomyces cerevisiae (strain ATCC 204508 / S288c) (Baker's yeast).